Reading from the N-terminus, the 228-residue chain is Putative ATP-dependent Clp protease proteolytic subunit-like (228 aa).

The protein belongs to the peptidase S14 family.

In terms of biological role, has lost the two conserved residues (Ser and His) proposed to be part of the active site. Therefore it could be inactive. The chain is Putative ATP-dependent Clp protease proteolytic subunit-like (clpR) from Synechococcus elongatus (strain ATCC 33912 / PCC 7942 / FACHB-805) (Anacystis nidulans R2).